The chain runs to 318 residues: Ribosomal RNA small subunit methyltransferase H (318 aa).

S-adenosyl-L-methionine-binding positions include 38–40 (GGH), D58, Y86, D107, and Q114.

It belongs to the methyltransferase superfamily. RsmH family.

It localises to the cytoplasm. It catalyses the reaction cytidine(1402) in 16S rRNA + S-adenosyl-L-methionine = N(4)-methylcytidine(1402) in 16S rRNA + S-adenosyl-L-homocysteine + H(+). In terms of biological role, specifically methylates the N4 position of cytidine in position 1402 (C1402) of 16S rRNA. The polypeptide is Ribosomal RNA small subunit methyltransferase H (Methylibium petroleiphilum (strain ATCC BAA-1232 / LMG 22953 / PM1)).